The following is a 508-amino-acid chain: Photosystem II CP47 reaction center protein (508 aa).

6 helical membrane passes run 21–36 (SVHLMHTALVSGWAGS), 101–115 (IVLSGLLFLASIWHW), 140–156 (GIHLFLSGLLCFGFGAF), 203–218 (IAAGILGILAGLFHLT), 237–252 (VLSSSIAAVFWAAFVV), and 457–472 (CFALLFFFGHIWHGAR).

This sequence belongs to the PsbB/PsbC family. PsbB subfamily. PSII is composed of 1 copy each of membrane proteins PsbA, PsbB, PsbC, PsbD, PsbE, PsbF, PsbH, PsbI, PsbJ, PsbK, PsbL, PsbM, PsbT, PsbX, PsbY, PsbZ, Psb30/Ycf12, at least 3 peripheral proteins of the oxygen-evolving complex and a large number of cofactors. It forms dimeric complexes. It depends on Binds multiple chlorophylls. PSII binds additional chlorophylls, carotenoids and specific lipids. as a cofactor.

Its subcellular location is the plastid. It is found in the chloroplast thylakoid membrane. Its function is as follows. One of the components of the core complex of photosystem II (PSII). It binds chlorophyll and helps catalyze the primary light-induced photochemical processes of PSII. PSII is a light-driven water:plastoquinone oxidoreductase, using light energy to abstract electrons from H(2)O, generating O(2) and a proton gradient subsequently used for ATP formation. This chain is Photosystem II CP47 reaction center protein, found in Chlorokybus atmophyticus (Soil alga).